We begin with the raw amino-acid sequence, 592 residues long: Frizzled-9 (592 aa).

An N-terminal signal peptide occupies residues 1–23 (MAVPPLLRGALLLWQLLATGGAA). The Extracellular portion of the chain corresponds to 24–230 (LEIGRFDPER…EVFWSRRDKD (207 aa)). In terms of domain architecture, FZ spans 35–156 (RGPAPCQAME…NDPHALCMEA (122 aa)). Disulfide bonds link Cys40-Cys101, Cys48-Cys94, Cys85-Cys123, Cys112-Cys153, and Cys116-Cys140. Asn54 is a glycosylation site (N-linked (GlcNAc...) asparagine). Residues 59–173 (PNLLGHTSQG…PTEPHKGLGM (115 aa)) form a required for Wnt-activated receptor activity region. N-linked (GlcNAc...) asparagine glycosylation occurs at Asn159. Residues 231–251 (FALVWMAVWSALCFFSTAFTV) traverse the membrane as a helical segment. Over 252-267 (FTFLLEPHRFQYPERP) the chain is Cytoplasmic. A helical membrane pass occupies residues 268-288 (IIFLSMCYNVYSLAFLIRAVA). Topologically, residues 289 to 316 (GAQSVACDQEAGALYVIQEGLENTGCTL) are extracellular. Residues 317–337 (VFLLLYYFGMASSLWWVVLTL) form a helical membrane-spanning segment. At 338–356 (TWFLAAGKKWGHEAIEAHG) the chain is on the cytoplasmic side. Residues 357 to 377 (SYFHMAAWGLPALKTIVVLTL) form a helical membrane-spanning segment. The Extracellular portion of the chain corresponds to 378 to 401 (RKVAGDELTGLCYVASMDPAALTG). A helical transmembrane segment spans residues 402-422 (FVLVPLSCYLVLGTSFLLTGF). At 423 to 448 (VALFHIRKIMKTGGTNTEKLEKLMVK) the chain is on the cytoplasmic side. Residues 449-469 (IGVFSILYTVPATCVIVCYVY) traverse the membrane as a helical segment. Residues 470–509 (ERLNMDFWRLRATEQPCTAATVPGGRRDCSLPGGSVPTVA) lie on the Extracellular side of the membrane. A helical membrane pass occupies residues 510-530 (VFMLKIFMSLVVGITSGVWVW). At 531-592 (SSKTFQTWQS…DPSLENPTHL (62 aa)) the chain is on the cytoplasmic side. The Lys-Thr-X-X-X-Trp motif, mediates interaction with the PDZ domain of Dvl family members signature appears at 533–538 (KTFQTW). The tract at residues 555–592 (ACRTPGGYGRGTHCHYKAPTVVLHMTKTDPSLENPTHL) is required for CTNNB1 accumulation and TCF transcription factor activity.

It belongs to the G-protein coupled receptor Fz/Smo family. Post-translationally, ubiquitinated by ZNRF3, leading to its degradation by the proteasome. In the embryo, found in the neural tube, trunk skeletal muscle precursors (myotomes), limb skeletal anlagen, craniofacial regions and nephric ducts. In the adult, expression is abundant in heart, brain, testis and skeletal muscle. In the testis, expressed in all spermatogenic cell types. Lower levels in adult lung, liver and kidney. Barely detectable in spleen. Expressed also in chondrocytes.

The protein localises to the cell membrane. Functionally, receptor for WNT2 that is coupled to the beta-catenin canonical signaling pathway, which leads to the activation of disheveled proteins, inhibition of GSK-3 kinase, nuclear accumulation of beta-catenin and activation of Wnt target genes. Plays a role in neuromuscular junction (NMJ) assembly by negatively regulating the clustering of acetylcholine receptors (AChR) through the beta-catenin canonical signaling pathway. May play a role in neural progenitor cells (NPCs) viability through the beta-catenin canonical signaling pathway by negatively regulating cell cycle arrest leading to inhibition of neuron apoptotic process. During hippocampal development, regulates neuroblast proliferation and apoptotic cell death. Controls bone formation through non canonical Wnt signaling mediated via ISG15. Positively regulates bone regeneration through non canonical Wnt signaling. In Mus musculus (Mouse), this protein is Frizzled-9 (Fzd9).